The chain runs to 143 residues: Transcriptional regulator MraZ (143 aa).

2 consecutive SpoVT-AbrB domains span residues 5-47 and 76-119; these read EYQH…PLTE and AMEG…AKER.

Belongs to the MraZ family. Forms oligomers.

The protein localises to the cytoplasm. It is found in the nucleoid. This Lactobacillus delbrueckii subsp. bulgaricus (strain ATCC 11842 / DSM 20081 / BCRC 10696 / JCM 1002 / NBRC 13953 / NCIMB 11778 / NCTC 12712 / WDCM 00102 / Lb 14) protein is Transcriptional regulator MraZ.